Consider the following 274-residue polypeptide: Cytochrome c oxidase subunit 3 (274 aa).

Helical transmembrane passes span 22–42, 47–67, 93–113, 137–157, 170–190, 208–228, and 248–268; these read PSPWPLGASVACLILTLGGVM, FAAGDIGLPLGLILVLASMLL, GVVLFIVSEILLFFSLFWAFF, PFEVPLLNTIILLTSGCTITV, TILYLILTILLAWMFLGLQWV, FFVATGFHGLHVMIGTIFLTV, and AAIWYWHVVDVIWLFLYVSVY.

It belongs to the cytochrome c oxidase subunit 3 family. In terms of assembly, component of the cytochrome c oxidase (complex IV, CIV), a multisubunit enzyme composed of a catalytic core of 3 subunits and several supernumerary subunits. The complex exists as a monomer or a dimer and forms supercomplexes (SCs) in the inner mitochondrial membrane with ubiquinol-cytochrome c oxidoreductase (cytochrome b-c1 complex, complex III, CIII).

The protein localises to the mitochondrion inner membrane. The enzyme catalyses 4 Fe(II)-[cytochrome c] + O2 + 8 H(+)(in) = 4 Fe(III)-[cytochrome c] + 2 H2O + 4 H(+)(out). Functionally, component of the cytochrome c oxidase, the last enzyme in the mitochondrial electron transport chain which drives oxidative phosphorylation. The respiratory chain contains 3 multisubunit complexes succinate dehydrogenase (complex II, CII), ubiquinol-cytochrome c oxidoreductase (cytochrome b-c1 complex, complex III, CIII) and cytochrome c oxidase (complex IV, CIV), that cooperate to transfer electrons derived from NADH and succinate to molecular oxygen, creating an electrochemical gradient over the inner membrane that drives transmembrane transport and the ATP synthase. Cytochrome c oxidase is the component of the respiratory chain that catalyzes the reduction of oxygen to water. Electrons originating from reduced cytochrome c in the intermembrane space (IMS) are transferred via the dinuclear copper A center (CU(A)) of subunit 2 and heme A of subunit 1 to the active site in subunit 1, a binuclear center (BNC) formed by heme A3 and copper B (CU(B)). The BNC reduces molecular oxygen to 2 water molecules using 4 electrons from cytochrome c in the IMS and 4 protons from the mitochondrial matrix. The protein is Cytochrome c oxidase subunit 3 (COX3) of Allomyces macrogynus.